Reading from the N-terminus, the 205-residue chain is Ribonuclease HII (205 aa).

An RNase H type-2 domain is found at 14-201; that stretch reads EIIAGVDEAG…KGNINHSAIL (188 aa). Residues Asp-20, Glu-21, and Asp-111 each contribute to the a divalent metal cation site.

Belongs to the RNase HII family. Requires Mn(2+) as cofactor. The cofactor is Mg(2+).

The protein localises to the cytoplasm. It catalyses the reaction Endonucleolytic cleavage to 5'-phosphomonoester.. In terms of biological role, endonuclease that specifically degrades the RNA of RNA-DNA hybrids. The polypeptide is Ribonuclease HII (Orientia tsutsugamushi (strain Ikeda) (Rickettsia tsutsugamushi)).